The primary structure comprises 475 residues: Glycogen synthase (475 aa).

K15 lines the ADP-alpha-D-glucose pocket.

This sequence belongs to the glycosyltransferase 1 family. Bacterial/plant glycogen synthase subfamily.

The catalysed reaction is [(1-&gt;4)-alpha-D-glucosyl](n) + ADP-alpha-D-glucose = [(1-&gt;4)-alpha-D-glucosyl](n+1) + ADP + H(+). It functions in the pathway glycan biosynthesis; glycogen biosynthesis. Synthesizes alpha-1,4-glucan chains using ADP-glucose. The polypeptide is Glycogen synthase (Chlamydia abortus (strain DSM 27085 / S26/3) (Chlamydophila abortus)).